The following is a 401-amino-acid chain: Imidazolonepropionase (401 aa).

Positions 66 and 68 each coordinate Fe(3+). Zn(2+) contacts are provided by H66 and H68. 4-imidazolone-5-propanoate is bound by residues R75, Y138, and H171. Y138 is an N-formimidoyl-L-glutamate binding site. Fe(3+) is bound at residue H236. Position 236 (H236) interacts with Zn(2+). Position 239 (Q239) interacts with 4-imidazolone-5-propanoate. D311 contributes to the Fe(3+) binding site. A Zn(2+)-binding site is contributed by D311. Residues N313 and G315 each coordinate N-formimidoyl-L-glutamate. Residue T316 participates in 4-imidazolone-5-propanoate binding.

Belongs to the metallo-dependent hydrolases superfamily. HutI family. Requires Zn(2+) as cofactor. The cofactor is Fe(3+).

It is found in the cytoplasm. It carries out the reaction 4-imidazolone-5-propanoate + H2O = N-formimidoyl-L-glutamate. It functions in the pathway amino-acid degradation; L-histidine degradation into L-glutamate; N-formimidoyl-L-glutamate from L-histidine: step 3/3. In terms of biological role, catalyzes the hydrolytic cleavage of the carbon-nitrogen bond in imidazolone-5-propanoate to yield N-formimidoyl-L-glutamate. It is the third step in the universal histidine degradation pathway. In Pseudomonas entomophila (strain L48), this protein is Imidazolonepropionase.